A 498-amino-acid chain; its full sequence is Lysine--tRNA ligase (498 aa).

2 residues coordinate Mg(2+): glutamate 408 and glutamate 415.

This sequence belongs to the class-II aminoacyl-tRNA synthetase family. In terms of assembly, homodimer. It depends on Mg(2+) as a cofactor.

It localises to the cytoplasm. The enzyme catalyses tRNA(Lys) + L-lysine + ATP = L-lysyl-tRNA(Lys) + AMP + diphosphate. In Listeria innocua serovar 6a (strain ATCC BAA-680 / CLIP 11262), this protein is Lysine--tRNA ligase.